A 764-amino-acid polypeptide reads, in one-letter code: Protective antigen (764 aa).

The first 29 residues, 1–29, serve as a signal peptide directing secretion; it reads MKKRKVLIPLMALSTILVSSTGNLEVIQA. Residues 30–287 are domain 1, calcium-binding; LF and EF binding sites; sequence EVKQENRLLN…PEARHPLVAA (258 aa). The PA14 domain occupies 43–179; that stretch reads SSSQGLLGYY…NKKEVISSDN (137 aa). The disordered stretch occupies residues 176 to 214; it reads SSDNLQLPELKQKSSNSRKKRSTSAGPTVPDRDNDGIPD. Positions 206, 208, 210, 212, and 217 each coordinate Ca(2+). Positions 231-239 are alpha-clamp; it reads FLSPWISNI. Ca(2+) is bound by residues Ser-251, Lys-254, and Asp-264. Residues 288-516 are domain 2, membrane insertion and heptamerization; that stretch reads YPIVHVDMEN…SEVLPQIQET (229 aa). The disordered stretch occupies residues 302 to 333; the sequence is KNEDQSTQNTDSQTRTISKNTSTSRTHTSEVH. Residues 306 to 327 show a composition bias toward polar residues; the sequence is QSTQNTDSQTRTISKNTSTSRT. Transmembrane regions (beta stranded) follow at residues 331–342 and 345–354; these read EVHGNAEVHASF and IGGSVSAGFS. Residues 517–624 are domain 3, heptamerization; the sequence is TARIIFNGKD…KMNILIRDKR (108 aa). Residues 625 to 764 are domain 4, binding to the receptor; sequence FHYDRNNIAV…IFSKKGYEIG (140 aa).

It belongs to the bacterial binary toxin family. In terms of assembly, interacts with host ANTXR1 and ANTXR2. Homooligomer; homooligomerizes to form homoheptamers (PA-63(7)) or homooctamers (PA-63(8)). PA-63(7) or PA-63(8) form ring-shaped oligomers that are in a pre-pore conformation, which do not penetrate the host membrane. PA-63(8) displays an enhanced stability, suggesting that this form circulates in the blood to reach and exert toxicity even in distant tissues. Interacts with lethal factor (LF) and edema factor (EF); can bind LF and EF simultaneously and interaction takes place following homooligomerization on the host cell membrane. PA-63(7) homoheptamer interacts with three molecules of LF to form the PA(7)LF(3) complex, in which the relative position of the N-terminal alpha-helices in the three LFs determines which factor is translocated first. Post-translationally, proteolytic activation by FURIN cleaves the protein in two parts, PA-20 and PA-63; the latter is the mature protein. The cleavage occurs at the cell surface and probably in the serum of infected animals as well; both native and cleaved PA are able to bind to the cell receptor. The release of PA-20 from the remaining receptor-bound PA-63 exposes the binding site for EF and LF, and promotes oligomerization and internalization of the protein.

It is found in the secreted. Its subcellular location is the host cell membrane. The protein localises to the host endosome membrane. Its function is as follows. Protective antigen constitutes one of the three proteins composing the anthrax toxin; it mediates attachment to host cells and translocation of edema factor (EF) and lethal factor (LF) into the host cytoplasm. PA associated with LF forms the lethal toxin (LeTx) and causes death when injected; PA associated with EF forms the edema toxin (EdTx) and produces edema. PA induces immunity to infection with anthrax. Mediates the attachment to host cells by binding host cell receptors ANTXR1 and ANTXR2. Following host cell surface attachment, PA is cleaved by FURIN to generate the PA-63 (Protective antigen PA-63) form, which constitutes the mature form of the protein that oligomerizes and forms a pore to translocate the enzymatic toxin components edema factor (EF) and lethal factor (LF) into the host cytosol. In terms of biological role, mature form that oligomerizes and forms a pore to translocate the enzymatic toxin components edema factor (EF) and lethal factor (LF) into the host cytosol. Following attachment to host cell receptors and cleavage by FURIN, homooligomerizes to form ring-shaped oligomers that are in a pre-pore conformation, and associates with EF and LF. Toxin-leaded complexes are then endocytosed in a clathrin-dependent process, followed by a conformational change of oligomerized PA-63 from the pre-pore to pore state, which is triggered by the low pH in the endosome. Once active, the pore mediates unfolding of EF and LF, which pass through the pore and translocate into the host cytosol. The sequence is that of Protective antigen (pagA) from Bacillus anthracis.